A 233-amino-acid chain; its full sequence is Orotidine 5'-phosphate decarboxylase (233 aa).

Substrate-binding positions include D13, K35, D62–T71, T122, R182, Q191, G211, and R212. K64 (proton donor) is an active-site residue.

This sequence belongs to the OMP decarboxylase family. Type 1 subfamily. As to quaternary structure, homodimer.

The enzyme catalyses orotidine 5'-phosphate + H(+) = UMP + CO2. Its pathway is pyrimidine metabolism; UMP biosynthesis via de novo pathway; UMP from orotate: step 2/2. Functionally, catalyzes the decarboxylation of orotidine 5'-monophosphate (OMP) to uridine 5'-monophosphate (UMP). This Pseudomonas entomophila (strain L48) protein is Orotidine 5'-phosphate decarboxylase.